The sequence spans 599 residues: UvrABC system protein C (599 aa).

The GIY-YIG domain maps to 18–96 (QLPGVYKMLG…IKQHRPPYNI (79 aa)). The region spanning 207–242 (KELNQELIAKMEQAAADLEFEKAVFYRDRLSLLREV) is the UVR domain.

The protein belongs to the UvrC family. In terms of assembly, interacts with UvrB in an incision complex.

The protein resides in the cytoplasm. In terms of biological role, the UvrABC repair system catalyzes the recognition and processing of DNA lesions. UvrC both incises the 5' and 3' sides of the lesion. The N-terminal half is responsible for the 3' incision and the C-terminal half is responsible for the 5' incision. The sequence is that of UvrABC system protein C from Acinetobacter baumannii (strain SDF).